The following is a 303-amino-acid chain: Ribosomal protein L11 methyltransferase (303 aa).

4 residues coordinate S-adenosyl-L-methionine: threonine 144, glycine 165, aspartate 187, and asparagine 235.

It belongs to the methyltransferase superfamily. PrmA family.

Its subcellular location is the cytoplasm. It catalyses the reaction L-lysyl-[protein] + 3 S-adenosyl-L-methionine = N(6),N(6),N(6)-trimethyl-L-lysyl-[protein] + 3 S-adenosyl-L-homocysteine + 3 H(+). Its function is as follows. Methylates ribosomal protein L11. The chain is Ribosomal protein L11 methyltransferase from Prochlorococcus marinus (strain MIT 9301).